A 150-amino-acid polypeptide reads, in one-letter code: Large ribosomal subunit protein bL9 (150 aa).

The protein belongs to the bacterial ribosomal protein bL9 family.

Functionally, binds to the 23S rRNA. The protein is Large ribosomal subunit protein bL9 of Wolinella succinogenes (strain ATCC 29543 / DSM 1740 / CCUG 13145 / JCM 31913 / LMG 7466 / NCTC 11488 / FDC 602W) (Vibrio succinogenes).